Here is a 153-residue protein sequence, read N- to C-terminus: Urease accessory protein UreE (153 aa).

Belongs to the UreE family.

Its subcellular location is the cytoplasm. Functionally, involved in urease metallocenter assembly. Binds nickel. Probably functions as a nickel donor during metallocenter assembly. This is Urease accessory protein UreE from Acetivibrio thermocellus (strain ATCC 27405 / DSM 1237 / JCM 9322 / NBRC 103400 / NCIMB 10682 / NRRL B-4536 / VPI 7372) (Clostridium thermocellum).